A 363-amino-acid polypeptide reads, in one-letter code: 3-dehydroquinate synthase (363 aa).

Residues 134–135 (TT), lysine 147, lysine 156, and 174–177 (TLIT) contribute to the NAD(+) site. 3 residues coordinate Zn(2+): glutamate 189, histidine 254, and histidine 271.

It belongs to the sugar phosphate cyclases superfamily. Dehydroquinate synthase family. The cofactor is NAD(+). Co(2+) is required as a cofactor. Zn(2+) serves as cofactor.

Its subcellular location is the cytoplasm. The catalysed reaction is 7-phospho-2-dehydro-3-deoxy-D-arabino-heptonate = 3-dehydroquinate + phosphate. The protein operates within metabolic intermediate biosynthesis; chorismate biosynthesis; chorismate from D-erythrose 4-phosphate and phosphoenolpyruvate: step 2/7. Its function is as follows. Catalyzes the conversion of 3-deoxy-D-arabino-heptulosonate 7-phosphate (DAHP) to dehydroquinate (DHQ). In Prochlorococcus marinus subsp. pastoris (strain CCMP1986 / NIES-2087 / MED4), this protein is 3-dehydroquinate synthase.